The following is a 291-amino-acid chain: Phosphate import ATP-binding protein PstB (291 aa).

The 244-residue stretch at 43–286 folds into the ABC transporter domain; that stretch reads ANVKDLSFWY…PKHAMTEEYI (244 aa). Residue 75–82 participates in ATP binding; the sequence is GASGCGKS.

It belongs to the ABC transporter superfamily. Phosphate importer (TC 3.A.1.7) family. The complex is composed of two ATP-binding proteins (PstB), two transmembrane proteins (PstC and PstA) and a solute-binding protein (PstS).

It localises to the cell inner membrane. The catalysed reaction is phosphate(out) + ATP + H2O = ADP + 2 phosphate(in) + H(+). In terms of biological role, part of the ABC transporter complex PstSACB involved in phosphate import. Responsible for energy coupling to the transport system. This chain is Phosphate import ATP-binding protein PstB, found in Alcaligenes faecalis.